We begin with the raw amino-acid sequence, 510 residues long: Bifunctional pantoate ligase/cytidylate kinase (510 aa).

The tract at residues 1 to 276 is pantoate--beta-alanine ligase; that stretch reads MKKVIIRKTE…CGETRLIDHV (276 aa). 29–36 contacts ATP; it reads MGNLHNGH. Catalysis depends on H36, which acts as the Proton donor. (R)-pantoate is bound at residue Q61. Q61 is a binding site for beta-alanine. 150-153 is a binding site for ATP; the sequence is GEKD. Q156 contacts (R)-pantoate. 187 to 190 contacts ATP; the sequence is LSSR. The tract at residues 277–510 is cytidylate kinase; sequence FLMKRSPIIA…DKIPKETQIR (234 aa).

This sequence in the N-terminal section; belongs to the pantothenate synthetase family. The protein in the C-terminal section; belongs to the cytidylate kinase family. Type 1 subfamily.

The protein localises to the cytoplasm. The enzyme catalyses (R)-pantoate + beta-alanine + ATP = (R)-pantothenate + AMP + diphosphate + H(+). It catalyses the reaction CMP + ATP = CDP + ADP. The catalysed reaction is dCMP + ATP = dCDP + ADP. It functions in the pathway cofactor biosynthesis; (R)-pantothenate biosynthesis; (R)-pantothenate from (R)-pantoate and beta-alanine: step 1/1. Its function is as follows. Catalyzes the condensation of pantoate with beta-alanine in an ATP-dependent reaction via a pantoyl-adenylate intermediate. In terms of biological role, catalyzes the transfer of a phosphate group from ATP to either CMP or dCMP to form CDP or dCDP and ADP, respectively. In Prochlorococcus marinus (strain MIT 9312), this protein is Bifunctional pantoate ligase/cytidylate kinase.